Consider the following 354-residue polypeptide: MTTAILQRLSTLSVSGQHLRRLPKILEDGLPKMPGTVPETDVPQLFREPYIRAGYRPIGHEWRYYFFSLFQKHNEVVNVWTHLLAALAVLLRFWAFVETEGLPWTSAHTLPLLLYVLSSITYLTFSLLAHLLQSKSELSHYTFYFVDYVGVSVYQYGSALVHFFYASDQAWYERFWLFFLPAAAFCGWLSCTGCCYAKYRYRRPYPVMRKVCQVVPAGLAFILDISPVAHRVALCHLSGCQEQAAWYHTLQIVFFLVSAYFFSCPVPEKYFPGSCDIVGHGHQIFHAFLSICTLSQLEAILLDYKGRQEIFLHRHSPLSIYAACLSFFFLVACSGATAALLREKIKARLSKKDS.

At 1 to 75 (MTTAILQRLS…FFSLFQKHNE (75 aa)) the chain is on the cytoplasmic side. The helical transmembrane segment at 76-96 (VVNVWTHLLAALAVLLRFWAF) threads the bilayer. The Extracellular segment spans residues 97–111 (VETEGLPWTSAHTLP). Residues 112–132 (LLLYVLSSITYLTFSLLAHLL) traverse the membrane as a helical segment. The Cytoplasmic portion of the chain corresponds to 133–174 (QSKSELSHYTFYFVDYVGVSVYQYGSALVHFFYASDQAWYER). A helical transmembrane segment spans residues 175–195 (FWLFFLPAAAFCGWLSCTGCC). Topologically, residues 196–213 (YAKYRYRRPYPVMRKVCQ) are extracellular. Residues 214–234 (VVPAGLAFILDISPVAHRVAL) traverse the membrane as a helical segment. The Cytoplasmic segment spans residues 235–243 (CHLSGCQEQ). The chain crosses the membrane as a helical span at residues 244 to 264 (AAWYHTLQIVFFLVSAYFFSC). The Extracellular portion of the chain corresponds to 265 to 283 (PVPEKYFPGSCDIVGHGHQ). A helical membrane pass occupies residues 284 to 304 (IFHAFLSICTLSQLEAILLDY). At 305–319 (KGRQEIFLHRHSPLS) the chain is on the cytoplasmic side. A helical transmembrane segment spans residues 320–340 (IYAACLSFFFLVACSGATAAL). Topologically, residues 341-354 (LREKIKARLSKKDS) are extracellular.

It belongs to the ADIPOR family.

Its subcellular location is the cell membrane. Steroid membrane receptor. Binds progesterone. May be involved in oocyte maturation. In Sus scrofa (Pig), this protein is Membrane progestin receptor beta (PAQR8).